The chain runs to 170 residues: Cytochrome P450 monooxygenase oryQ (170 aa).

Cys-85 is a binding site for heme.

The protein belongs to the cytochrome P450 family. Heme serves as cofactor.

The protein operates within secondary metabolite biosynthesis. Cytochrome P450 monooxygenase; part of the gene cluster that mediates the biosynthesis of oryzines, natural products with an unusual maleidride backbone. The two subunits of the fungal fatty acid synthase oryfasA and oryfasB probably form octenoic acid. This fatty acid is most likely activated by the acyl-CoA ligase oryP to give octenyl-CoA before the citrate synthase-like protein oryE catalyzes condensation with oxaloacetate to form tricarboxylic acid. The next steps of the pathways are conjectural, but a favorite possible route has been proposed, beginning with decarboxylation and concomitant dehydration by the decarboxylase oryM, followed by tautomerization, which may lead to the production of a diene intermediate. Reduction of this diene intermediate could give the known metabolite piliformic acid. On the pathway to oryzine B and oryzine A, however, hydroxylation of the diene by the alpha-ketoglutarate-dependent dioxygenase oryG and lactonisation by the lactonohydrolases oryH or oryL could give oryzine B directly. Finally, enoyl reduction by the dehydrogenase oryD would then convert oryzine B into oryzine A. In Aspergillus oryzae (strain ATCC 42149 / RIB 40) (Yellow koji mold), this protein is Cytochrome P450 monooxygenase oryQ.